The chain runs to 121 residues: CRISPR system Cms protein Csm2 (121 aa).

Belongs to the CRISPR-associated Csm2 family. As to quaternary structure, part of the Csm effector complex that includes at least Cas10(1), Csm2(3), Csm3(5), Csm4(1), Csm5(1) and mature crRNA. The Csm complex is elongated and slightly twisted with a maximal length of 215 Angstroms and a diameter of 75-80 Angstroms. It has been modeled to have a central protein filamant of Csm3 subunits along which the dsRNA helix of paired crRNA and target RNA binds. The filament is capped at one end by Cas10 and Csm4 and at the other end by Csm5; ssDNA is thought to bind to the N-terminal HD domain of Cas10. Csm with a precursor crRNA does not include Csm5, while Cas6, the enzyme probably involved in pre-crRNA processing, is found associated with a subset of the Csm complex.

CRISPR (clustered regularly interspaced short palindromic repeat) is an adaptive immune system that provides protection against mobile genetic elements (viruses, transposable elements and conjugative plasmids). CRISPR clusters contain spacers, sequences complementary to antecedent mobile elements, and target invading nucleic acids. CRISPR clusters are transcribed and processed into CRISPR RNA (crRNA). The type III-A Csm effector complex binds crRNA and acts as a crRNA-guided RNase, DNase and cyclic oligoadenylate synthase; binding of target RNA cognate to the crRNA is required for all activities. In a heterologous host this Csm effector complex restricts ssRNA phage MS2, suggesting it may target RNA viruses in vivo. Functionally, csm functions as a non-specific ssDNase. Base-pairing between crRNA and target RNA to form a ternary Csm complex activates a ssDNase activity; target RNA cleavage suppresses the ssDNase, a temporal control that prevents uncontrolled DNA degradation. Viral RNA transcripts probably tether the Csm complex to the viral genome, recruiting Cas10 ssDNA activity which is able to degrade DNA in the transcription bubble, spatially controlling the DNase activity. Its function is as follows. This subunit may be involved in monitoring complementarity of crRNA and target RNA. The protein is CRISPR system Cms protein Csm2 of Streptococcus thermophilus.